The following is a 571-amino-acid chain: MEILSGAEMVIRSLINQGIQHIFGYPGGAVLDIYDALKTVGGVEHILVRHEQAATHMADGYARSTGKIGVVLVTSGPGATNAITGIATAYMDSIPMVVISGQVASSLIGYDAFQECDMIGISRPIVKHSFLVKRTEDIPIIFKKAFWLASTGRPGPVVIDLPKDILKKTNKYNFIWPKNIHIRSYNPTTKGHQGQIKKALRILLKAKKPIIYAGGGIISSNSSEELRIFAEKINCPVTTSLMGLGAFPGNHIQSISMLGMHGTYEANMAMHYSDVIFAIGVRFDDRTTNNLKKYCPNATILHVDIDPTSISKTVSADIPIVGDAKQVLKEMIELIKKEKQIHSLKEWWSSIGKWKKIKSLEYNKKSNKIKPQKIIQTLFKLTKGTSYITSDVGQHQMFTALYYQFNKPRRWINSGGLGTMGFGLPAALGVKLALPKATVICVTGDGSIQMNIQELSTARQYNLAVLILNLNNSSLGMVKQWQDMIYSGRHSHSYMDSLPDFVKLVESYGHIGLKVKTNEELEEKLILALKKLSEGNLVFLDIQIDDSEHVYPMQIQGGGMNEMWLRKKEVS.

Glutamate 51 lines the thiamine diphosphate pocket. Residues arginine 153, 261-282 (HGTY…IGVR), and 304-323 (DIDP…IVGD) contribute to the FAD site. The tract at residues 394 to 474 (QHQMFTALYY…VLILNLNNSS (81 aa)) is thiamine pyrophosphate binding. Mg(2+)-binding residues include aspartate 445 and asparagine 472.

It belongs to the TPP enzyme family. Dimer of large and small chains. It depends on Mg(2+) as a cofactor. Thiamine diphosphate is required as a cofactor.

The catalysed reaction is 2 pyruvate + H(+) = (2S)-2-acetolactate + CO2. Its pathway is amino-acid biosynthesis; L-isoleucine biosynthesis; L-isoleucine from 2-oxobutanoate: step 1/4. The protein operates within amino-acid biosynthesis; L-valine biosynthesis; L-valine from pyruvate: step 1/4. This is Acetolactate synthase large subunit (ilvI) from Buchnera aphidicola subsp. Schizaphis graminum (strain Sg).